The sequence spans 116 residues: Iron-sulfur cluster insertion protein ErpA (116 aa).

Residues cysteine 44, cysteine 108, and cysteine 110 each coordinate iron-sulfur cluster.

Belongs to the HesB/IscA family. As to quaternary structure, homodimer. The cofactor is iron-sulfur cluster.

Required for insertion of 4Fe-4S clusters for at least IspG. The chain is Iron-sulfur cluster insertion protein ErpA from Francisella philomiragia subsp. philomiragia (strain ATCC 25017 / CCUG 19701 / FSC 153 / O#319-036).